A 247-amino-acid chain; its full sequence is Cell division protein ZapD (247 aa).

Belongs to the ZapD family. In terms of assembly, interacts with FtsZ.

Its subcellular location is the cytoplasm. Functionally, cell division factor that enhances FtsZ-ring assembly. Directly interacts with FtsZ and promotes bundling of FtsZ protofilaments, with a reduction in FtsZ GTPase activity. This Salmonella dublin (strain CT_02021853) protein is Cell division protein ZapD.